The sequence spans 489 residues: Glutamyl-tRNA(Gln) amidotransferase subunit A (489 aa).

Catalysis depends on charge relay system residues K77 and S152. S176 serves as the catalytic Acyl-ester intermediate.

It belongs to the amidase family. GatA subfamily. Heterotrimer of A, B and C subunits.

It catalyses the reaction L-glutamyl-tRNA(Gln) + L-glutamine + ATP + H2O = L-glutaminyl-tRNA(Gln) + L-glutamate + ADP + phosphate + H(+). In terms of biological role, allows the formation of correctly charged Gln-tRNA(Gln) through the transamidation of misacylated Glu-tRNA(Gln) in organisms which lack glutaminyl-tRNA synthetase. The reaction takes place in the presence of glutamine and ATP through an activated gamma-phospho-Glu-tRNA(Gln). In Protochlamydia amoebophila (strain UWE25), this protein is Glutamyl-tRNA(Gln) amidotransferase subunit A.